The chain runs to 147 residues: GLSAAQRQVIAATWKDIAGADNGAGVGKDCLIKFLSAHPQMAAVFGFSGASDPGVAALGAKVLAQIGVAVSHLGDEGKMVAQMKAVGVRHKGYGNKHIKAQYFEPLGASLLSAMEHRIGGKMNAAAKDAWAAAYADISGALISGLQS.

Residues 1–146 (GLSAAQRQVI…ISGALISGLQ (146 aa)) enclose the Globin domain. Position 90 (His90) interacts with heme b.

The protein belongs to the globin family. As to quaternary structure, monomer.

The chain is Globin, major monomeric component from Glycera dibranchiata (Bloodworm).